The chain runs to 891 residues: Mating-type protein A-alpha Y1 (891 aa).

A DNA-binding region (homeobox) is located at residues 146–205; sequence SKKPRPKFHSEYTPLLELYFRFNAYPTYADRRVLAEKTGMLTRQITVWFQNHRRRAKGPL. Disordered regions lie at residues 241-291, 319-339, 393-437, 610-718, and 800-822; these read PITL…PSTL, DIEM…LPKG, TRKP…RRVS, ARRK…EQSL, and MNWT…GGDE. The span at 244-257 shows a compositional bias: polar residues; that stretch reads LGNNKTPDLTTSSR. A compositionally biased stretch (basic residues) spans 328 to 337; it reads PKRRKMKKLP. Low complexity predominate over residues 427-437; sequence ASSTVPSRRVS. The span at 627-638 shows a compositional bias: basic residues; sequence KKDKKERKKAGL. Composition is skewed to low complexity over residues 651 to 667 and 676 to 710; these read VSSR…TSAR and QPSS…SMPS. Polar residues predominate over residues 800 to 818; the sequence is MNWTASVGSNAQDPASQES.

It localises to the nucleus. Functionally, specifies A-alpha-1 mating-type. May regulate the expression of genes specific to the homokaryotic cell type. The polypeptide is Mating-type protein A-alpha Y1 (Schizophyllum commune (Split gill fungus)).